Consider the following 220-residue polypeptide: Large ribosomal subunit protein uL3 (220 aa).

The disordered stretch occupies residues 113–143 (GTTKGHGYQGNIHKDGQRRGPMAHGSRYHRR).

Belongs to the universal ribosomal protein uL3 family. As to quaternary structure, part of the 50S ribosomal subunit. Forms a cluster with proteins L14 and L19.

One of the primary rRNA binding proteins, it binds directly near the 3'-end of the 23S rRNA, where it nucleates assembly of the 50S subunit. This chain is Large ribosomal subunit protein uL3, found in Limosilactobacillus fermentum (strain NBRC 3956 / LMG 18251) (Lactobacillus fermentum).